The chain runs to 205 residues: LexA repressor (205 aa).

The segment at residues 29–49 (IRDICKATGLRSSSTVYNYLN) is a DNA-binding region (H-T-H motif). Active-site for autocatalytic cleavage activity residues include serine 128 and lysine 165.

This sequence belongs to the peptidase S24 family. As to quaternary structure, homodimer.

The enzyme catalyses Hydrolysis of Ala-|-Gly bond in repressor LexA.. Functionally, represses a number of genes involved in the response to DNA damage (SOS response), including recA and lexA. In the presence of single-stranded DNA, RecA interacts with LexA causing an autocatalytic cleavage which disrupts the DNA-binding part of LexA, leading to derepression of the SOS regulon and eventually DNA repair. The sequence is that of LexA repressor from Moorella thermoacetica (strain ATCC 39073 / JCM 9320).